The primary structure comprises 706 residues: Translation initiation factor IF-2 (706 aa).

The span at 55-81 (AKETANEKPAEQKKQSSNKINDRKKND) shows a compositional bias: basic and acidic residues. The segment at 55–127 (AKETANEKPA…KPKKELPEKI (73 aa)) is disordered. Over residues 82 to 98 (VQNNQFNKNKKNNNQNK) the composition is skewed to low complexity. The tr-type G domain occupies 207 to 376 (VRPPVVTIMG…LLVSEVGELK (170 aa)). Residues 216-223 (GHVDHGKT) are G1. Position 216-223 (216-223 (GHVDHGKT)) interacts with GTP. A G2 region spans residues 241-245 (GITQH). The segment at 262 to 265 (DTPG) is G3. GTP is bound by residues 262 to 266 (DTPGH) and 316 to 319 (NKID). The segment at 316-319 (NKID) is G4. The interval 352–354 (SAK) is G5.

This sequence belongs to the TRAFAC class translation factor GTPase superfamily. Classic translation factor GTPase family. IF-2 subfamily.

Its subcellular location is the cytoplasm. Its function is as follows. One of the essential components for the initiation of protein synthesis. Protects formylmethionyl-tRNA from spontaneous hydrolysis and promotes its binding to the 30S ribosomal subunits. Also involved in the hydrolysis of GTP during the formation of the 70S ribosomal complex. The protein is Translation initiation factor IF-2 of Bacillus pumilus (strain SAFR-032).